The primary structure comprises 548 residues: Organic cation transporter protein (548 aa).

Residues 1–22 lie on the Cytoplasmic side of the membrane; it reads MGYDDVITHLGEFGPYQKRIYY. A helical membrane pass occupies residues 23-43; that stretch reads LLCLPAIVCAFHKLAGVFLLA. Residues 44-127 lie on the Extracellular side of the membrane; the sequence is KPDFRCALPY…TEWNLVCSRS (84 aa). Residues asparagine 55, asparagine 67, asparagine 89, and asparagine 97 are each glycosylated (N-linked (GlcNAc...) asparagine). The helical transmembrane segment at 128-148 threads the bilayer; it reads LLSATSDSLFMLGVLLGSLIF. Residues 149-158 lie on the Cytoplasmic side of the membrane; sequence GQMSDKLGRK. The chain crosses the membrane as a helical span at residues 159–179; the sequence is PTFFASLVLQLIFGVLAAVAP. The Extracellular portion of the chain corresponds to 180–189; sequence EYFSYTISRM. The chain crosses the membrane as a helical span at residues 190–210; the sequence is IVGATTSGVFLVAYVIALEMV. Residues 211-219 lie on the Cytoplasmic side of the membrane; that stretch reads GSSYRLFAG. A helical membrane pass occupies residues 220–240; it reads VAMQMFFSVGFMLTAGFAYFI. Residues 241 to 244 are Extracellular-facing; sequence HDWR. The chain crosses the membrane as a helical span at residues 245 to 265; the sequence is WLQIAITLPGLLFLCYYWIIP. Topologically, residues 266-337 are cytoplasmic; the sequence is ESARWLLMKG…LLRYPNLRRK (72 aa). A helical transmembrane segment spans residues 338-358; sequence TLLIFFDWFVNSGVYYGLSWN. Residues 359 to 366 lie on the Extracellular side of the membrane; that stretch reads TNNLGGNQ. Residues 367–387 traverse the membrane as a helical segment; the sequence is LVNFMISGAVEIPGYTLLLFT. Topologically, residues 388 to 395 are cytoplasmic; that stretch reads LNRWGRRS. A helical transmembrane segment spans residues 396 to 416; the sequence is ILCGTMMVAGISLLATIFVPS. The Extracellular portion of the chain corresponds to 417–419; sequence DMN. A helical membrane pass occupies residues 420-440; that stretch reads WLIVACAMIGKLAITSSYGTI. The Cytoplasmic segment spans residues 441–453; sequence YIFSAEQFPTVVR. Residues 454–474 traverse the membrane as a helical segment; sequence NVGLGASSMVARVGGILAPYL. The Extracellular portion of the chain corresponds to 475 to 482; the sequence is KLLGEIWR. The chain crosses the membrane as a helical span at residues 483–503; sequence PLPLIICGALSLTAGLLSLLL. Over 504–548 the chain is Cytoplasmic; that stretch reads PETLNKPMPETIEDGENFGKKPAPQETAEEGGTQELSGMLNGKSG. Positions 512–548 are disordered; sequence PETIEDGENFGKKPAPQETAEEGGTQELSGMLNGKSG.

It belongs to the major facilitator (TC 2.A.1) superfamily. Organic cation transporter (TC 2.A.1.19) family. As to expression, expressed in embryos and adults at low level. Expressed at higher level in third instar larvae.

The protein localises to the membrane. In terms of biological role, probably transports organic cations. The polypeptide is Organic cation transporter protein (Orct) (Drosophila melanogaster (Fruit fly)).